The following is a 130-amino-acid chain: Small ribosomal subunit protein uS11c (130 aa).

Belongs to the universal ribosomal protein uS11 family. Part of the 30S ribosomal subunit.

It is found in the plastid. Its subcellular location is the chloroplast. The protein is Small ribosomal subunit protein uS11c of Marchantia polymorpha (Common liverwort).